The primary structure comprises 1239 residues: Protein strawberry notch homolog 1 (1239 aa).

The segment at 684-837 (AQSNNNSPRD…SANSNTNSSF (154 aa)) is disordered. The segment covering 694-713 (SPCKENKIKKRKGEEVSREA) has biased composition (basic and acidic residues). The span at 728-744 (DESESESDASDNEESDN) shows a compositional bias: acidic residues. Residues 778 to 790 (KEHKKVKEKKKKK) are compositionally biased toward basic residues. A compositionally biased stretch (low complexity) spans 814-837 (FTSTVGTTTSSTNASANSNTNSSF). Residues 838-866 (VTSQDAVERAQQMKKELLDKLEKLAEDLP) adopt a coiled-coil conformation.

It belongs to the SBNO family.

The protein localises to the nucleus. In terms of biological role, plays a crucial role in the regulation of neural stem cells (NSCs) proliferation. Enhances the phosphorylation of GSK3B through the PI3K-Akt signaling pathway, thereby upregulating the Wnt/beta-catenin signaling pathway and promoting the proliferation of NSCs. The chain is Protein strawberry notch homolog 1 (SBNO1) from Gallus gallus (Chicken).